We begin with the raw amino-acid sequence, 200 residues long: Holliday junction resolvase RecU (200 aa).

The disordered stretch occupies residues 1 to 24 (MTIRYPNGKRYDQASQPHKTPIKK). Mg(2+) is bound by residues Thr85, Asp87, Glu100, and Gln119.

It belongs to the RecU family. Requires Mg(2+) as cofactor.

The protein resides in the cytoplasm. The enzyme catalyses Endonucleolytic cleavage at a junction such as a reciprocal single-stranded crossover between two homologous DNA duplexes (Holliday junction).. Its function is as follows. Endonuclease that resolves Holliday junction intermediates in genetic recombination. Cleaves mobile four-strand junctions by introducing symmetrical nicks in paired strands. Promotes annealing of linear ssDNA with homologous dsDNA. Required for DNA repair, homologous recombination and chromosome segregation. This chain is Holliday junction resolvase RecU, found in Bacillus mycoides (strain KBAB4) (Bacillus weihenstephanensis).